A 232-amino-acid chain; its full sequence is MNNFFQDFNLLFSSSLFSSYMDWFYNFNCSLLFGVLSFVSTMFVYLLLSSFYFKSKKIEYQFGELLCSVFPTLILVMQMVPSLSLLYYYGLMNLDSSLTVKVTGHQWYWSYEFSDIPGLEFDSYMKSLDQLELGEPRLLEVDNRCVVPCDVNIRFCITSGDVIHSWALPSMSIKLDAMSGILSTLSYSFPVVGVFYGQCSEICGANHSFMPVALEVTLLDNFKSWCVGLLSD.

Residues 1-30 (MNNFFQDFNLLFSSSLFSSYMDWFYNFNCS) lie on the Mitochondrial intermembrane side of the membrane. Residues 31–52 (LLFGVLSFVSTMFVYLLLSSFY) form a helical membrane-spanning segment. Residues 53 to 69 (FKSKKIEYQFGELLCSV) lie on the Mitochondrial matrix side of the membrane. A helical transmembrane segment spans residues 70 to 89 (FPTLILVMQMVPSLSLLYYY). Residues 90-232 (GLMNLDSSLT…KSWCVGLLSD (143 aa)) are Mitochondrial intermembrane-facing. Cu cation-binding residues include His164, Cys199, Glu201, Cys203, His207, and Met210. Position 201 (Glu201) interacts with Mg(2+).

The protein belongs to the cytochrome c oxidase subunit 2 family. In terms of assembly, component of the cytochrome c oxidase (complex IV, CIV), a multisubunit enzyme composed of a catalytic core of 3 subunits and several supernumerary subunits. The complex exists as a monomer or a dimer and forms supercomplexes (SCs) in the inner mitochondrial membrane with ubiquinol-cytochrome c oxidoreductase (cytochrome b-c1 complex, complex III, CIII). Requires Cu cation as cofactor.

The protein localises to the mitochondrion inner membrane. It carries out the reaction 4 Fe(II)-[cytochrome c] + O2 + 8 H(+)(in) = 4 Fe(III)-[cytochrome c] + 2 H2O + 4 H(+)(out). Component of the cytochrome c oxidase, the last enzyme in the mitochondrial electron transport chain which drives oxidative phosphorylation. The respiratory chain contains 3 multisubunit complexes succinate dehydrogenase (complex II, CII), ubiquinol-cytochrome c oxidoreductase (cytochrome b-c1 complex, complex III, CIII) and cytochrome c oxidase (complex IV, CIV), that cooperate to transfer electrons derived from NADH and succinate to molecular oxygen, creating an electrochemical gradient over the inner membrane that drives transmembrane transport and the ATP synthase. Cytochrome c oxidase is the component of the respiratory chain that catalyzes the reduction of oxygen to water. Electrons originating from reduced cytochrome c in the intermembrane space (IMS) are transferred via the dinuclear copper A center (CU(A)) of subunit 2 and heme A of subunit 1 to the active site in subunit 1, a binuclear center (BNC) formed by heme A3 and copper B (CU(B)). The BNC reduces molecular oxygen to 2 water molecules using 4 electrons from cytochrome c in the IMS and 4 protons from the mitochondrial matrix. This Ascaris suum (Pig roundworm) protein is Cytochrome c oxidase subunit 2 (COII).